A 542-amino-acid chain; its full sequence is Tubby-related protein 1 (542 aa).

The segment at 1-289 (MPLRDETLRE…RAPSPPVEVD (289 aa)) is disordered. A compositionally biased stretch (basic and acidic residues) spans 91-104 (FLRDPEAKKRDPRE). A compositionally biased stretch (acidic residues) spans 114–132 (AEDEEEEEEEDEEDEEEEA). A compositionally biased stretch (basic and acidic residues) spans 146-157 (PLREKSSADLKE). The segment covering 262–275 (SNQKGKAKGKGKKK) has biased composition (basic residues).

This sequence belongs to the TUB family. Homodimer. May interact with ABCF1, PSIP1, ZEB1 and HMGB2 (Potential). Interacts with DNM1. Interacts with F-actin. Interacts with TUB. Interacts with TYRO3. As to expression, retina-specific.

Its subcellular location is the cytoplasm. The protein resides in the cell membrane. It localises to the secreted. It is found in the synapse. Its function is as follows. Required for normal development of photoreceptor synapses. Required for normal photoreceptor function and for long-term survival of photoreceptor cells. Interacts with cytoskeleton proteins and may play a role in protein transport in photoreceptor cells. Binds lipids, especially phosphatidylinositol 3-phosphate, phosphatidylinositol 4-phosphate, phosphatidylinositol 5-phosphate, phosphatidylinositol 3,4-bisphosphate, phosphatidylinositol 4,5-bisphosphate, phosphatidylinositol 3,4,5-bisphosphate, phosphatidylserine and phosphatidic acid (in vitro). Contribute to stimulation of phagocytosis of apoptotic retinal pigment epithelium (RPE) cells and macrophages. This Homo sapiens (Human) protein is Tubby-related protein 1 (TULP1).